The chain runs to 178 residues: Adenine phosphoribosyltransferase (178 aa).

This sequence belongs to the purine/pyrimidine phosphoribosyltransferase family. In terms of assembly, homodimer.

It localises to the cytoplasm. It carries out the reaction AMP + diphosphate = 5-phospho-alpha-D-ribose 1-diphosphate + adenine. It functions in the pathway purine metabolism; AMP biosynthesis via salvage pathway; AMP from adenine: step 1/1. In terms of biological role, catalyzes a salvage reaction resulting in the formation of AMP, that is energically less costly than de novo synthesis. The sequence is that of Adenine phosphoribosyltransferase from Helicobacter hepaticus (strain ATCC 51449 / 3B1).